A 176-amino-acid chain; its full sequence is N-alpha-acetyltransferase NAT5 (176 aa).

The 163-residue stretch at 14-176 folds into the N-acetyltransferase domain; sequence NNLGMLTKLA…DAILLKKHIS (163 aa).

It belongs to the acetyltransferase family. As to quaternary structure, component of the N-terminal acetyltransferase A (NatA) complex, which is composed of ARD1, NAT1 and NAT5.

The protein localises to the cytoplasm. It catalyses the reaction N-terminal L-methionyl-L-alanyl-[protein] + acetyl-CoA = N-terminal N(alpha)-acetyl-L-methionyl-L-alanyl-[protein] + CoA + H(+). The catalysed reaction is N-terminal L-methionyl-L-seryl-[protein] + acetyl-CoA = N-terminal N(alpha)-acetyl-L-methionyl-L-seryl-[protein] + CoA + H(+). It carries out the reaction N-terminal L-methionyl-L-valyl-[protein] + acetyl-CoA = N-terminal N(alpha)-acetyl-L-methionyl-L-valyl-[protein] + CoA + H(+). The enzyme catalyses N-terminal L-methionyl-L-threonyl-[protein] + acetyl-CoA = N-terminal N(alpha)-acetyl-L-methionyl-L-threonyl-[protein] + CoA + H(+). It catalyses the reaction N-terminal L-methionyl-L-lysyl-[protein] + acetyl-CoA = N-terminal N(alpha)-acetyl-L-methionyl-L-lysyl-[protein] + CoA + H(+). The catalysed reaction is N-terminal L-methionyl-L-leucyl-[protein] + acetyl-CoA = N-terminal N(alpha)-acetyl-L-methionyl-L-leucyl-[protein] + CoA + H(+). It carries out the reaction N-terminal L-methionyl-L-phenylalanyl-[protein] + acetyl-CoA = N-terminal N(alpha)-acetyl-L-methionyl-L-phenylalanyl-[protein] + CoA + H(+). The enzyme catalyses N-terminal L-methionyl-L-tyrosyl-[protein] + acetyl-CoA = N-terminal N(alpha)-acetyl-L-methionyl-L-tyrosyl-[protein] + CoA + H(+). N-alpha-acetyltransferase that acetylates the N-terminus of proteins that retain their initiating methionine. Has a broad substrate specificity: able to acetylate the initiator methionine of most peptides. Non-essential component of the NatA N-terminal acetyltransferase. In Saccharomyces cerevisiae (strain ATCC 204508 / S288c) (Baker's yeast), this protein is N-alpha-acetyltransferase NAT5.